We begin with the raw amino-acid sequence, 115 residues long: ESX-1 secretion-associated protein EspL (115 aa).

The protein is ESX-1 secretion-associated protein EspL of Mycobacterium tuberculosis (strain CDC 1551 / Oshkosh).